A 269-amino-acid polypeptide reads, in one-letter code: UPF0494 membrane protein C1348.01 (269 aa).

A run of 4 helical transmembrane segments spans residues 107-127, 144-164, 177-197, and 201-221; these read WPLL…KFEV, IWVP…SLIF, GVII…IAAL, and ITGL…LSLG.

It belongs to the UPF0494 family.

It localises to the vacuole membrane. This is UPF0494 membrane protein C1348.01 from Schizosaccharomyces pombe (strain 972 / ATCC 24843) (Fission yeast).